The following is a 164-amino-acid chain: Heat shock protein beta-6 (164 aa).

Positions 1 to 72 (MEIPVSVQPS…PTAQVSTDPG (72 aa)) are involved in stabilization of the HSPB1:HSBP6 heterodimer. Residue S16 is modified to Phosphoserine. The sHSP domain maps to 56–163 (RAPSVALPTA…PLQSPPGAAA (108 aa)). Position 66 is a deamidated glutamine (Q66). S157 carries the post-translational modification Phosphoserine.

It belongs to the small heat shock protein (HSP20) family. As to quaternary structure, homodimer. Small heat shock proteins form high molecular mass oligomers containing variable number of monomers; these oligomers display a very flexible quaternary structure easily exchanging their subunits. Heterooligomer with HSPB1; formed through oligomerization of HSPB1:HSBP6 dimers; subunit exchange leads to formation of at least two different heterooligomeric complexes, differing in variable quantities of HSPB1 and HSPB6 homodimers in addition to HSPB1:HSPB6 heterodimers. Heterooligomer with CRYAB; large heterooligomers consist of CRYAB homodimers and HSPB5:HSPB6 heterodimers but lacking HSPB6 homodimers. Interacts with BAG3. Interacts (phosphorylated) with YWHAZ. Interacts with PDE4A and PDE4D; required for maintenance of the non-phosphorylated state of HSPB6 under basal conditions. Interacts with KDR. Interacts with PRKD1. Post-translationally, phosphorylated at Ser-16 by PKA and probably PKD1K; required to protect cardiomyocytes from apoptosis.

It localises to the cytoplasm. Its subcellular location is the nucleus. The protein resides in the secreted. Its function is as follows. Small heat shock protein which functions as a molecular chaperone probably maintaining denatured proteins in a folding-competent state. Seems to have versatile functions in various biological processes. Plays a role in regulating muscle function such as smooth muscle vasorelaxation and cardiac myocyte contractility. May regulate myocardial angiogenesis implicating KDR. Overexpression mediates cardioprotection and angiogenesis after induced damage. Stabilizes monomeric YWHAZ thereby supporting YWHAZ chaperone-like activity. In Bos taurus (Bovine), this protein is Heat shock protein beta-6 (HSPB6).